Consider the following 619-residue polypeptide: Polyadenylate-binding protein 1-like (619 aa).

RRM domains follow at residues 11–89, 99–175, 191–268, and 294–370; these read ASLY…WSQR, GNIF…HFKS, TNIY…RAQK, and VNLY…LAQR. A disordered region spans residues 431–458; that stretch reads PAPRWTSQPPRPSSAYPPGASMVRPPVV. A PABC domain is found at 533–610; the sequence is QEPLTASMLA…AVAVLQAHQA (78 aa).

It belongs to the polyadenylate-binding protein type-1 family. As to expression, expressed in ovary and testis. Also expressed in pancreas, liver and thymus, and at lower levels in other somatic tissues including brain and lung.

It localises to the cytoplasm. Poly(A)-binding protein involved in oocyte maturation and early embryo development. It is required for cytosolic mRNA polyadenylation and translational activation of maternally stored mRNA in oocytes. This Homo sapiens (Human) protein is Polyadenylate-binding protein 1-like.